A 317-amino-acid polypeptide reads, in one-letter code: Acetyl-coenzyme A carboxylase carboxyl transferase subunit alpha (317 aa).

Residues 40–293 form the CoA carboxyltransferase C-terminal domain; that stretch reads LEKRSADALK…GDIIAASLRS (254 aa).

It belongs to the AccA family. In terms of assembly, acetyl-CoA carboxylase is a heterohexamer composed of biotin carboxyl carrier protein (AccB), biotin carboxylase (AccC) and two subunits each of ACCase subunit alpha (AccA) and ACCase subunit beta (AccD).

It is found in the cytoplasm. The enzyme catalyses N(6)-carboxybiotinyl-L-lysyl-[protein] + acetyl-CoA = N(6)-biotinyl-L-lysyl-[protein] + malonyl-CoA. It participates in lipid metabolism; malonyl-CoA biosynthesis; malonyl-CoA from acetyl-CoA: step 1/1. Component of the acetyl coenzyme A carboxylase (ACC) complex. First, biotin carboxylase catalyzes the carboxylation of biotin on its carrier protein (BCCP) and then the CO(2) group is transferred by the carboxyltransferase to acetyl-CoA to form malonyl-CoA. The protein is Acetyl-coenzyme A carboxylase carboxyl transferase subunit alpha of Brucella melitensis biotype 2 (strain ATCC 23457).